The chain runs to 141 residues: Plasmatocyte-spreading peptide (141 aa).

Positions 1–22 (MKLTINILFCLILISQYNSANG) are cleaved as a signal peptide. Residues 23-118 (NLRDLFNNVR…ATGGKDDKGR (96 aa)) constitute a propeptide that is removed on maturation. Positions 46-58 (VKTLFHPSDKSGN) are enriched in basic and acidic residues. A disordered region spans residues 46 to 118 (VKTLFHPSDK…ATGGKDDKGR (73 aa)). Residues 83–98 (PVAVTPAPVVSTTTQA) show a composition bias toward low complexity. Positions 99–108 (SAPTVATNGT) are enriched in polar residues. A disulfide bond links cysteine 125 and cysteine 137.

Belongs to the GBP/PSP1/paralytic peptide family.

Mediates the spreading of plasmatocytes to foreign surfaces. Plasmocytes are a class of hemocytes involved in insect cellular immunity. This Chrysodeixis includens (Soybean looper) protein is Plasmatocyte-spreading peptide (PSP1).